The primary structure comprises 353 residues: CCN family member 3 (353 aa).

A signal peptide spans 1-26 (MEPGGGHSLPVLLLLLLLLLLRPSEV). An IGFBP N-terminal domain is found at 29 to 103 (REAPCPRPCG…GGGTGICMVL (75 aa)). 6 disulfide bridges follow: cysteine 33–cysteine 59, cysteine 37–cysteine 61, cysteine 41–cysteine 62, cysteine 48–cysteine 65, cysteine 73–cysteine 87, and cysteine 79–cysteine 100. Residues 106–172 (DNCVFDGMIY…GECCEKWVCE (67 aa)) enclose the VWFC domain. Residues 203-248 (NCIEQTTEWSACSRSCGMGFSTRVTNRNQQCEMVKQTRLCMMRPCE) enclose the TSP type-1 domain. Cystine bridges form between cysteine 260-cysteine 297, cysteine 277-cysteine 311, cysteine 288-cysteine 327, cysteine 291-cysteine 329, and cysteine 296-cysteine 333. The region spanning 260–334 (CIRTKKSMKA…NTCVCHGNCP (75 aa)) is the CTCK domain. Asparagine 276 carries an N-linked (GlcNAc...) asparagine glycan.

Belongs to the CCN family.

It is found in the secreted. It localises to the cytoplasm. Its subcellular location is the cell junction. The protein localises to the gap junction. Immediate-early protein likely to play a role in cell growth regulation. This Coturnix japonica (Japanese quail) protein is CCN family member 3 (CCN3).